We begin with the raw amino-acid sequence, 245 residues long: Uridylate kinase (245 aa).

ATP is bound at residue 20–23 (KLSG). Residue G60 coordinates UMP. Positions 61 and 65 each coordinate ATP. Residues D80 and 141–148 (AGLPYFST) contribute to the UMP site. Residues Y175 and D178 each contribute to the ATP site.

The protein belongs to the UMP kinase family. As to quaternary structure, homohexamer.

The protein localises to the cytoplasm. It carries out the reaction UMP + ATP = UDP + ADP. It functions in the pathway pyrimidine metabolism; CTP biosynthesis via de novo pathway; UDP from UMP (UMPK route): step 1/1. Its activity is regulated as follows. Inhibited by UTP. Functionally, catalyzes the reversible phosphorylation of UMP to UDP. This is Uridylate kinase from Arthrobacter sp. (strain FB24).